A 633-amino-acid polypeptide reads, in one-letter code: Kinesin-like motor protein 9 (633 aa).

Positions 1–392 constitute a Kinesin motor domain; it reads MIQIFLRVKK…MRYSANAREI (392 aa). 94–101 contacts ATP; the sequence is GVSGAGKT. Disordered stretches follow at residues 393 to 423, 531 to 556, and 575 to 633; these read LPPP…TKAL, LEEE…SRKL, and KLWP…INEL. Polar residues predominate over residues 398–423; sequence NENSGSQSPSHSLLQKSKNTSSTKAL. The stretch at 417 to 541 forms a coiled coil; that stretch reads TSSTKALTSH…EEESIKESSA (125 aa). A compositionally biased stretch (polar residues) spans 578-587; that stretch reads PQSTLIQAPN. A compositionally biased stretch (low complexity) spans 604–623; that stretch reads VSPIKPLSPSRRPPLTSLYS. Residues Ser605, Ser611, and Ser613 each carry the phosphoserine modification. Polar residues predominate over residues 624–633; the sequence is GTTDIDINEL.

This sequence belongs to the TRAFAC class myosin-kinesin ATPase superfamily. Kinesin family. Interacts with ase1. In terms of processing, phosphorylated by cdc2 and dephosphorylated by clp1. Dephosphorylation is required for the interaction with ase1.

The protein resides in the nucleus. Its subcellular location is the cytoplasm. It is found in the cytoskeleton. It localises to the microtubule organizing center. The protein localises to the spindle pole body. Its function is as follows. Kinesin-like motor protein involved in anaphase B spindle elongation. The sequence is that of Kinesin-like motor protein 9 (klp9) from Schizosaccharomyces pombe (strain 972 / ATCC 24843) (Fission yeast).